The sequence spans 227 residues: Cytochrome c oxidase subunit 2 (227 aa).

Topologically, residues 1–14 (MAYPFQLGLQDATS) are mitochondrial intermembrane. Residues 15-45 (PIMEELTNFHDHTLMIVFLISSLVLYIISLM) form a helical membrane-spanning segment. Residues 46–59 (LTTKLTHTNTMDAQ) lie on the Mitochondrial matrix side of the membrane. A helical membrane pass occupies residues 60–87 (EVETIWTILPAVILILIALPSLRILYMM). The Mitochondrial intermembrane portion of the chain corresponds to 88–227 (DEINNPALTV…HFENWSASMI (140 aa)). Cu cation-binding residues include histidine 161, cysteine 196, glutamate 198, cysteine 200, histidine 204, and methionine 207. A Mg(2+)-binding site is contributed by glutamate 198.

This sequence belongs to the cytochrome c oxidase subunit 2 family. As to quaternary structure, component of the cytochrome c oxidase (complex IV, CIV), a multisubunit enzyme composed of 14 subunits. The complex is composed of a catalytic core of 3 subunits MT-CO1, MT-CO2 and MT-CO3, encoded in the mitochondrial DNA, and 11 supernumerary subunits COX4I, COX5A, COX5B, COX6A, COX6B, COX6C, COX7A, COX7B, COX7C, COX8 and NDUFA4, which are encoded in the nuclear genome. The complex exists as a monomer or a dimer and forms supercomplexes (SCs) in the inner mitochondrial membrane with NADH-ubiquinone oxidoreductase (complex I, CI) and ubiquinol-cytochrome c oxidoreductase (cytochrome b-c1 complex, complex III, CIII), resulting in different assemblies (supercomplex SCI(1)III(2)IV(1) and megacomplex MCI(2)III(2)IV(2)). Found in a complex with TMEM177, COA6, COX18, COX20, SCO1 and SCO2. Interacts with TMEM177 in a COX20-dependent manner. Interacts with COX20. Interacts with COX16. The cofactor is Cu cation.

Its subcellular location is the mitochondrion inner membrane. It carries out the reaction 4 Fe(II)-[cytochrome c] + O2 + 8 H(+)(in) = 4 Fe(III)-[cytochrome c] + 2 H2O + 4 H(+)(out). Its function is as follows. Component of the cytochrome c oxidase, the last enzyme in the mitochondrial electron transport chain which drives oxidative phosphorylation. The respiratory chain contains 3 multisubunit complexes succinate dehydrogenase (complex II, CII), ubiquinol-cytochrome c oxidoreductase (cytochrome b-c1 complex, complex III, CIII) and cytochrome c oxidase (complex IV, CIV), that cooperate to transfer electrons derived from NADH and succinate to molecular oxygen, creating an electrochemical gradient over the inner membrane that drives transmembrane transport and the ATP synthase. Cytochrome c oxidase is the component of the respiratory chain that catalyzes the reduction of oxygen to water. Electrons originating from reduced cytochrome c in the intermembrane space (IMS) are transferred via the dinuclear copper A center (CU(A)) of subunit 2 and heme A of subunit 1 to the active site in subunit 1, a binuclear center (BNC) formed by heme A3 and copper B (CU(B)). The BNC reduces molecular oxygen to 2 water molecules using 4 electrons from cytochrome c in the IMS and 4 protons from the mitochondrial matrix. In Sundamys muelleri (Mueller's giant sunda rat), this protein is Cytochrome c oxidase subunit 2 (MT-CO2).